The following is a 312-amino-acid chain: RNA pseudouridylate synthase domain-containing protein 1 (312 aa).

Residue Met1 is modified to N-acetylmethionine. Asp67 is a catalytic residue. The segment at 256 to 298 is disordered; that stretch reads ATPDPDPEDRGPRPGSPSALLPGPGRPPPPPTKPPETEAQRGP. Residues 279 to 289 show a composition bias toward pro residues; that stretch reads PGRPPPPPTKP.

The protein belongs to the pseudouridine synthase RluA family.

The polypeptide is RNA pseudouridylate synthase domain-containing protein 1 (RPUSD1) (Homo sapiens (Human)).